The primary structure comprises 1704 residues: Phospholipid-transporting ATPase ABCA3 (1704 aa).

N-linked (GlcNAc...) asparagine glycosylation occurs at Asn-14. The helical transmembrane segment at 22–42 (VLVTVLELFLPLLFSGILIWL) threads the bilayer. N-linked (GlcNAc...) asparagine glycans are attached at residues Asn-53, Asn-124, Asn-140, and Asn-228. 6 helical membrane-spanning segments follow: residues 261-283 (YQLPLLLMLSFTYTSLTIIRAVV), 307-327 (AWFLMFFLFFLIVVSFMTLLF), 344-364 (SLVLAFLLCFAISSISFSFMV), 373-393 (IAAAVGGFLYFFTYTPYFFVA), 405-425 (LLSCLLSNVAMAMGAQLIGKF), and 447-467 (FCFGQVLGMLLLDSALYGLVT). An ABC transporter 1 domain is found at 530-763 (IKIKHLSKVF…YGAGYHMTLV (234 aa)). 566-573 (GHNGAGKT) serves as a coordination point for ATP. An N-linked (GlcNAc...) asparagine glycan is attached at Asn-620. 7 helical membrane passes run 925–945 (MVAAQVLVPLTCLTLALLAIH), 1100–1120 (IALNLLIAMAFLASTFSILAV), 1144–1164 (SALLWDLISFLVPSLLLLVVF), 1183–1203 (LLLMLYGWAIIPLMYLMSFFF), 1213–1233 (LTIFNILSGIATFIMVTIMRI), 1245–1265 (LDHVFLVLPNHCLGMAVSNFY), and 1310–1330 (MAASGGIYLTLLFLIETNLLW). N-linked (GlcNAc...) asparagine glycosylation is present at Asn-1350. An ABC transporter 2 domain is found at 1381–1614 (LIINELSKVY…FGSGYSLQAK (234 aa)). 1416 to 1423 (GFNGAGKT) provides a ligand contact to ATP.

Belongs to the ABC transporter superfamily. ABCA family. Homooligomer; disulfide-linked. In terms of processing, N-glycosylated. Localization at intracellular vesicles is accompanied by processing of oligosaccharide from high mannose type to complex type. N-linked glycosylation at Asn-124 and Asn-140 is required for stability and efficient anterograde trafficking and prevents from proteasomal degradation. Post-translationally, proteolytically cleaved by CTSL and to a lower extent by CTSB within multivesicular bodies (MVB) and lamellar bodies (LB) leading to a mature form of 150 kDa. Highly expressed in the lung and moderately expressed in the kidney, adipose, macrophage, and spleen.

The protein localises to the endosome. Its subcellular location is the multivesicular body membrane. The protein resides in the cytoplasmic vesicle membrane. It is found in the late endosome membrane. It localises to the lysosome membrane. The catalysed reaction is a 1,2-diacyl-sn-glycero-3-phospho-(1'-sn-glycerol)(in) + ATP + H2O = a 1,2-diacyl-sn-glycero-3-phospho-(1'-sn-glycerol)(out) + ADP + phosphate + H(+). It catalyses the reaction a 1,2-diacyl-sn-glycero-3-phosphocholine(in) + ATP + H2O = a 1,2-diacyl-sn-glycero-3-phosphocholine(out) + ADP + phosphate + H(+). The enzyme catalyses ATP + H2O + phospholipidSide 1 = ADP + phosphate + phospholipidSide 2.. It carries out the reaction ATP + H2O + xenobioticSide 1 = ADP + phosphate + xenobioticSide 2.. The catalysed reaction is 1,2-dihexadecanoyl-sn-glycero-3-phosphocholine(in) + ATP + H2O = 1,2-dihexadecanoyl-sn-glycero-3-phosphocholine(out) + ADP + phosphate + H(+). It catalyses the reaction cholesterol(in) + ATP + H2O = cholesterol(out) + ADP + phosphate + H(+). Its function is as follows. Catalyzes the ATP-dependent transport of phospholipids such as phosphatidylcholine and phosphoglycerol from the cytoplasm into the lumen side of lamellar bodies, in turn participates in the lamellar bodies biogenesis and homeostasis of pulmonary surfactant. Transports preferentially phosphatidylcholine containing short acyl chains. In addition plays a role as an efflux transporter of miltefosine across macrophage membranes and free cholesterol (FC) through intralumenal vesicles by removing FC from the cell as a component of surfactant and protects cells from free cholesterol toxicity. This Mus musculus (Mouse) protein is Phospholipid-transporting ATPase ABCA3 (Abca3).